Reading from the N-terminus, the 309-residue chain is tRNA pseudouridine synthase B (309 aa).

Catalysis depends on Asp39, which acts as the Nucleophile.

The protein belongs to the pseudouridine synthase TruB family. Type 1 subfamily.

The enzyme catalyses uridine(55) in tRNA = pseudouridine(55) in tRNA. Functionally, responsible for synthesis of pseudouridine from uracil-55 in the psi GC loop of transfer RNAs. The chain is tRNA pseudouridine synthase B from Bacillus licheniformis (strain ATCC 14580 / DSM 13 / JCM 2505 / CCUG 7422 / NBRC 12200 / NCIMB 9375 / NCTC 10341 / NRRL NRS-1264 / Gibson 46).